Here is a 133-residue protein sequence, read N- to C-terminus: MMTDPIADMLTRIRNAVRVERPFVDIPASRVKRGLADVLKREGFIWDWKEEKLEEEPVGYLRLELKYGPNGERVIQSIRRISKPGRRLYSRSKELKPVLGGLGIRIISTSKGVISDREARRDKIGGEVLCEVS.

This sequence belongs to the universal ribosomal protein uS8 family. In terms of assembly, part of the 30S ribosomal subunit. Contacts proteins S5 and S12.

Functionally, one of the primary rRNA binding proteins, it binds directly to 16S rRNA central domain where it helps coordinate assembly of the platform of the 30S subunit. This Rhodopirellula baltica (strain DSM 10527 / NCIMB 13988 / SH1) protein is Small ribosomal subunit protein uS8.